We begin with the raw amino-acid sequence, 389 residues long: Alanine racemase (389 aa).

Catalysis depends on K46, which acts as the Proton acceptor; specific for D-alanine. An N6-(pyridoxal phosphate)lysine modification is found at K46. A substrate-binding site is contributed by R144. Y275 functions as the Proton acceptor; specific for L-alanine in the catalytic mechanism. M323 contacts substrate.

This sequence belongs to the alanine racemase family. Requires pyridoxal 5'-phosphate as cofactor.

It carries out the reaction L-alanine = D-alanine. Its pathway is amino-acid biosynthesis; D-alanine biosynthesis; D-alanine from L-alanine: step 1/1. In terms of biological role, catalyzes the interconversion of L-alanine and D-alanine. May also act on other amino acids. This chain is Alanine racemase (alr), found in Mycolicibacterium smegmatis (strain ATCC 700084 / mc(2)155) (Mycobacterium smegmatis).